A 243-amino-acid chain; its full sequence is Uridylate kinase (243 aa).

K15–G18 lines the ATP pocket. G57 is a binding site for UMP. ATP-binding residues include G58 and R62. Residues D77 and T138–T145 each bind UMP. Residues T165, N166, Y171, and D174 each coordinate ATP.

This sequence belongs to the UMP kinase family. As to quaternary structure, homohexamer.

Its subcellular location is the cytoplasm. It carries out the reaction UMP + ATP = UDP + ADP. It participates in pyrimidine metabolism; CTP biosynthesis via de novo pathway; UDP from UMP (UMPK route): step 1/1. Inhibited by UTP. Catalyzes the reversible phosphorylation of UMP to UDP. The chain is Uridylate kinase from Coxiella burnetii (strain RSA 493 / Nine Mile phase I).